The sequence spans 149 residues: Inner membrane protein YdcZ (149 aa).

Over 1 to 4 (MNQS) the chain is Periplasmic. A helical transmembrane segment spans residues 5–25 (LTLAFLIAAGIGLVVQNTLMV). At 26-33 (RITQTSST) the chain is on the cytoplasmic side. Residues 34 to 54 (ILIAMLLNSLVGIVLFVSILW) form a helical membrane-spanning segment. The Periplasmic portion of the chain corresponds to 55–70 (FKQGMAGFGELVSSVR). Residues 71–91 (WWTLIPGLLGSFFVFASISGY) form a helical membrane-spanning segment. The Cytoplasmic portion of the chain corresponds to 92–93 (QN). A helical membrane pass occupies residues 94–114 (VGAATTIAVLVASQLIGGLML). Residues 115–123 (DIFRSHGVP) are Periplasmic-facing. A helical transmembrane segment spans residues 124-144 (LRALFGPICGAILLVVGAWLV). Residues 145 to 149 (ARRSF) lie on the Cytoplasmic side of the membrane.

The protein localises to the cell inner membrane. In Escherichia coli (strain K12), this protein is Inner membrane protein YdcZ (ydcZ).